The chain runs to 63 residues: Putative conjugal transfer lipoprotein XF_a0011.1 (63 aa).

Residues 1-15 (MRYTFGIVTVYLLAG) form the signal peptide. A lipid anchor (N-palmitoyl cysteine) is attached at Cys-16. Residue Cys-16 is the site of S-diacylglycerol cysteine attachment.

To B.suis ORF12 in VirB region.

The protein localises to the cell inner membrane. This is Putative conjugal transfer lipoprotein XF_a0011.1 from Xylella fastidiosa (strain 9a5c).